Consider the following 242-residue polypeptide: Megakaryocyte and platelet inhibitory receptor G6b (242 aa).

The N-terminal stretch at 1-17 is a signal peptide; the sequence is MALVLPLLPLLLSKVQG. N-linked (GlcNAc...) asparagine glycans are attached at residues asparagine 32 and asparagine 112. The helical transmembrane segment at 141 to 161 threads the bilayer; it reads VLIPLLGVGLVLGLGVAGVVW. Short sequence motifs (ITIM motif) lie at residues 210 to 215 and 236 to 241; these read LHYADL and TVYAVV. Residue tyrosine 212 is modified to Phosphotyrosine.

In terms of assembly, interacts (via ITIM motif) with PTPN6 and PTPN11. Binds to heparin. N-glycosylated. In terms of processing, may be O-glycosylated. Post-translationally, phosphorylated. Expressed in mature megakaryocytes and platelets. Not expressed by immature megakaryocytes.

It is found in the cell membrane. Its function is as follows. Inhibitory receptor that acts as a critical regulator of hematopoietic lineage differentiation, megakaryocyte function and platelet production. Inhibits platelet aggregation and activation by agonists such as ADP and collagen-related peptide. This regulation of megakaryocate function as well as platelet production ann activation is done through the inhibition (via the 2 ITIM motifs) of the receptors CLEC1B and GP6:FcRgamma signaling. Appears to operate in a calcium-independent manner. The protein is Megakaryocyte and platelet inhibitory receptor G6b of Mus musculus (Mouse).